A 503-amino-acid polypeptide reads, in one-letter code: MSEARGEPGSGPEAGARFFCTAGRGLEPFVMREVRARLAATQVEYISGKVFFTTCSDLNMLKKLKSAERLFLLIKKQFPLIISSVSKGKIFNEMQRLINEDPGSWLNAISIWKNLLELDAKKEKLSQRDDNQLKRKVGENEIIAKKLKIEQMQKIEENRDCQLEKQIKEETLEQRDFTTKSEKFQEEEFQNDIEKAIDTHNQNDLTFRVSCRCSGTIGKAFTAQEVGKVIGIAIMKHFGWKADLRNPQLEIFIHLNDIYSVVGIPVFRVSLASRAYIKTAGLRSTIAWAMASLADIKAGAFVLDPMCGLGTILLEAAKEWPDVYYVGADVSDSQLLGTWDNLKAAGLEDKIELLKISVIELPLPSESVDIIISDIPFGKKFKLGKDIKSILQEMERVLHVGGTIVLLLSEDHHRRLTDCKESNIPFNSKDSHTDEPGIKKCLNPEEKTGAFKTASTSFEASNHKFLDRMSPFGSLVPVECYKVSLGKTDAFICKYKKSHSSGL.

A THUMP domain is found at 161-266 (CQLEKQIKEE…DIYSVVGIPV (106 aa)).

The protein belongs to the methyltransferase superfamily. As to quaternary structure, part of the heterodimeric THUMPD2-TRM112 methyltransferase complex; this complex forms an active tRNA methyltransferase, where TRMT112 acts as an activator of the catalytic subunit THUMPD2. In terms of tissue distribution, expressed in a variety of tissues including brain, colon, gingiva, heart, kidney, liver, lung, placenta, small intestine, spleen and thymus.

Its subcellular location is the nucleus. The catalysed reaction is guanosine in U6 snRNA + S-adenosyl-L-methionine = N(2)-methylguanosine in U6 snRNA + S-adenosyl-L-homocysteine + H(+). Functionally, catalytic subunit of the THUMPD2-TRM112 methyltransferase complex, that specifically mediates the S-adenosyl-L-methionine-dependent N(2)-methylation of guanosine nucleotides, most probably at position 72 (m2G72), in the U6snRNA of the major spliceosome. This modification in the U6 snRNA affects the constitutive splicing efficiency of introns that have suboptimal splice sites and can impact final mRNA levels. This Homo sapiens (Human) protein is U6 snRNA (guanine-N(2))-methyltransferase THUMPD2.